A 291-amino-acid polypeptide reads, in one-letter code: Nucleotide-binding protein LMHCC_0126 (291 aa).

An ATP-binding site is contributed by 13 to 20 (GMSGAGKT). GTP is bound at residue 63–66 (DLRG).

It belongs to the RapZ-like family.

Displays ATPase and GTPase activities. This is Nucleotide-binding protein LMHCC_0126 from Listeria monocytogenes serotype 4a (strain HCC23).